Here is a 687-residue protein sequence, read N- to C-terminus: Epithelial splicing regulatory protein 1 (687 aa).

RRM domains follow at residues 226–303 (TIIR…KATG), 327–407 (VIVR…RSTA), and 446–526 (DCIR…QCSA).

It belongs to the ESRP family.

It is found in the nucleus. MRNA splicing factor that regulates the formation of epithelial cell-specific isoforms. Specifically regulates the expression of FGFR2-IIIb, an epithelial cell-specific isoform of fgfr2. Acts by directly binding specific sequences in mRNAs. Binds the GU-rich sequence motifs in the ISE/ISS-3, a cis-element regulatory region present in the mRNA of fgfr2. In Xenopus tropicalis (Western clawed frog), this protein is Epithelial splicing regulatory protein 1 (esrp1).